A 979-amino-acid polypeptide reads, in one-letter code: Mast/stem cell growth factor receptor Kit (979 aa).

Positions 1 to 24 are cleaved as a signal peptide; sequence MRGARGAWDLLCVLLVLLRGQTAT. The Extracellular segment spans residues 25–527; that stretch reads SQPSASPGEP…QIQAHTLFTP (503 aa). 3 Ig-like C2-type domains span residues 31–117, 126–210, and 217–315; these read PGEP…DPAK, FGKE…AAIK, and VPET…EKGF. Cystine bridges form between Cys58–Cys98, Cys137–Cys187, Cys152–Cys184, and Cys234–Cys293. The N-linked (GlcNAc...) asparagine glycan is linked to Asn146. Residues Asn296, Asn303, Asn323, Asn355, Asn370, Asn466, and Asn489 are each glycosylated (N-linked (GlcNAc...) asparagine). 2 Ig-like C2-type domains span residues 324–417 and 420–514; these read TTVF…TKPE and TYDR…FKGN. Cysteines 431 and 494 form a disulfide. The helical transmembrane segment at 528-548 threads the bilayer; sequence LLIGFVVAAGAMGIIVMVLTY. At 549 to 979 the chain is on the cytoplasmic side; sequence KYLQKPMYEV…TQPLLVHEDA (431 aa). Tyr550 and Tyr556 each carry phosphotyrosine; by autocatalysis. A Mg(2+)-binding site is contributed by Tyr571. Tyr571 and Tyr573 each carry phosphotyrosine. The tract at residues 571–573 is important for interaction with phosphotyrosine-binding proteins; it reads YVY. The 348-residue stretch at 592-939 folds into the Protein kinase domain; that stretch reads LSFGKTLGAG…ISDSTKHIYS (348 aa). ATP is bound by residues 599–606, Lys626, and 674–680; these read GAGAFGKV and EYCCYGD. Phosphotyrosine is present on Tyr706. Ser720 carries the phosphoserine modification. Phosphotyrosine; by autocatalysis is present on residues Tyr723 and Tyr732. Ser743 and Ser748 each carry phosphoserine; by PKC/PRKCA. Catalysis depends on Asp794, which acts as the Proton acceptor. Position 798 (Arg798) interacts with ATP. Residues Asn799 and Asp812 each coordinate Mg(2+). Ser823 is subject to Phosphoserine. Phosphotyrosine; by autocatalysis is present on Tyr825. A Phosphoserine modification is found at Ser893. Phosphotyrosine; by autocatalysis is present on Tyr902. Tyr938 is modified (phosphotyrosine). At Ser962 the chain carries Phosphoserine.

It belongs to the protein kinase superfamily. Tyr protein kinase family. CSF-1/PDGF receptor subfamily. In terms of assembly, monomer in the absence of bound KITLG/SCF. Homodimer in the presence of bound KITLG/SCF, forming a heterotetramer with two KITLG/SCF molecules. Interacts (via phosphorylated tyrosine residues) with the adapter proteins GRB2 and GRB7 (via SH2 domain), and SH2B2/APS. Interacts (via C-terminus) with MPDZ (via the tenth PDZ domain). Interacts (via phosphorylated tyrosine residues) with the protein phosphatases PTPN6/SHP-1 (via SH2 domain), PTPN11/SHP-2 (via SH2 domain) and PTPRU. Interacts with DOK1 and TEC. Interacts with the protein kinase FES/FPS. Interacts with PLCG1. Interacts (via phosphorylated tyrosine residues) with PIK3R1 and PIK3 catalytic subunit. Interacts (KITLG/SCF-bound) with IL1RL1. Interacts with IL1RAP (independent of stimulation with KITLG/SCF). A mast cell-specific KITLG/SCF-induced interleukin-33 signaling complex contains IL1RL1, IL1RAP, KIT and MYD88. In terms of processing, ubiquitinated by SOCS6. KIT is rapidly ubiquitinated after autophosphorylation induced by KITLG/SCF binding, leading to internalization and degradation. Autophosphorylated on tyrosine residues. KITLG/SCF binding promotes autophosphorylation of isoform 1 and isoform 2. Isoform 1 shows low levels of tyrosine phosphorylation in the absence of added KITLG/SCF, while isoform 2 requires stimulation by KITLG/SCF for phosphorylation (in vitro). Phosphorylation of Tyr-573 is required for interaction with PTPN6/SHP-1. Phosphorylation of Tyr-571 is required for interaction with PTPN11/SHP-2. Phosphorylated tyrosine residues are important for interaction with specific binding partners. In terms of tissue distribution, isoform 1 and isoform 2 are detected in bone marrow cells, spermatogonia and spermatocytes, but not in round spermatids, elongating spermatids and spermatozoa. Isoform 3 is detected in round spermatids, elongating spermatids and spermatozoa, but not in spermatogonia and spermatocytes (at protein level). Isoform 1 is widely expressed and detected in fetal liver and bone marrow. Isoform 3 is detected in bone marrow cells enriched in hematopoietic stem cells.

The protein resides in the cell membrane. It is found in the cytoplasm. It carries out the reaction L-tyrosyl-[protein] + ATP = O-phospho-L-tyrosyl-[protein] + ADP + H(+). Present in an inactive conformation in the absence of bound ligand. KITLG/SCF binding leads to dimerization and activation by autophosphorylation. Functionally, tyrosine-protein kinase that acts as a cell-surface receptor for the cytokine KITLG/SCF and plays an essential role in the regulation of cell survival and proliferation, hematopoiesis, stem cell maintenance, gametogenesis, mast cell development, migration and function, and in melanogenesis. In response to KITLG/SCF binding, KIT can activate several signaling pathways. Phosphorylates PIK3R1, PLCG1, SH2B2/APS and CBL. Activates the AKT1 signaling pathway by phosphorylation of PIK3R1, the regulatory subunit of phosphatidylinositol 3-kinase. Activated KIT also transmits signals via GRB2 and activation of RAS, RAF1 and the MAP kinases MAPK1/ERK2 and/or MAPK3/ERK1. Promotes activation of STAT family members STAT1, STAT3, STAT5A and STAT5B. Activation of PLCG1 leads to the production of the cellular signaling molecules diacylglycerol and inositol 1,4,5-trisphosphate. KIT signaling is modulated by protein phosphatases, and by rapid internalization and degradation of the receptor. Activated KIT promotes phosphorylation of the protein phosphatases PTPN6/SHP-1 and PTPRU, and of the transcription factors STAT1, STAT3, STAT5A and STAT5B. Promotes phosphorylation of PIK3R1, CBL, CRK (isoform Crk-II), LYN, MAPK1/ERK2 and/or MAPK3/ERK1, PLCG1, SRC and SHC1. The sequence is that of Mast/stem cell growth factor receptor Kit (Kit) from Mus musculus (Mouse).